The primary structure comprises 358 residues: Chorismate synthase (358 aa).

Arginine 46 provides a ligand contact to NADP(+). Residues 123–125 (RSS), 235–236 (NA), glycine 275, 290–294 (KATPS), and arginine 316 each bind FMN.

Belongs to the chorismate synthase family. As to quaternary structure, homotetramer. It depends on FMNH2 as a cofactor.

It catalyses the reaction 5-O-(1-carboxyvinyl)-3-phosphoshikimate = chorismate + phosphate. The protein operates within metabolic intermediate biosynthesis; chorismate biosynthesis; chorismate from D-erythrose 4-phosphate and phosphoenolpyruvate: step 7/7. In terms of biological role, catalyzes the anti-1,4-elimination of the C-3 phosphate and the C-6 proR hydrogen from 5-enolpyruvylshikimate-3-phosphate (EPSP) to yield chorismate, which is the branch point compound that serves as the starting substrate for the three terminal pathways of aromatic amino acid biosynthesis. This reaction introduces a second double bond into the aromatic ring system. The chain is Chorismate synthase from Aliarcobacter butzleri (strain RM4018) (Arcobacter butzleri).